Here is a 109-residue protein sequence, read N- to C-terminus: MAFASVLKDAEITAALDGCKAAGSFDHKKFFKACGLSGKSADEVKKAFAIIDQDKSGYIEEEELKLFLQNFKAGARALSDAETKAFLKAGDSDGDGKIGVDEFAAMIKG.

N-acetylalanine is present on Ala2. EF-hand domains follow at residues 39 to 74 (KSAD…FKAG) and 78 to 109 (LSDA…MIKG). The Ca(2+) site is built by Asp52, Asp54, Ser56, Tyr58, Glu60, Glu63, Asp91, Asp93, Asp95, Lys97, and Glu102.

It belongs to the parvalbumin family. The N-terminus is blocked.

Its function is as follows. In muscle, parvalbumin is thought to be involved in relaxation after contraction. It binds two calcium ions. The protein is Parvalbumin beta of Scomber scombrus (Atlantic mackerel).